A 157-amino-acid polypeptide reads, in one-letter code: Ribosome maturation factor RimP (157 aa).

This sequence belongs to the RimP family.

Its subcellular location is the cytoplasm. Required for maturation of 30S ribosomal subunits. This Streptococcus thermophilus (strain ATCC BAA-491 / LMD-9) protein is Ribosome maturation factor RimP.